The chain runs to 441 residues: ATP-dependent protease ATPase subunit HslU (441 aa).

ATP is bound by residues Ile17, 60-65, Asp253, Glu319, and Arg391; that span reads GVGKTE.

This sequence belongs to the ClpX chaperone family. HslU subfamily. In terms of assembly, a double ring-shaped homohexamer of HslV is capped on each side by a ring-shaped HslU homohexamer. The assembly of the HslU/HslV complex is dependent on binding of ATP.

It localises to the cytoplasm. In terms of biological role, ATPase subunit of a proteasome-like degradation complex; this subunit has chaperone activity. The binding of ATP and its subsequent hydrolysis by HslU are essential for unfolding of protein substrates subsequently hydrolyzed by HslV. HslU recognizes the N-terminal part of its protein substrates and unfolds these before they are guided to HslV for hydrolysis. The protein is ATP-dependent protease ATPase subunit HslU of Legionella pneumophila (strain Paris).